Here is a 443-residue protein sequence, read N- to C-terminus: Methyl-coenzyme M reductase subunit beta (443 aa).

Tyrosine 367 lines the coenzyme M pocket. Glycine 369 serves as a coordination point for coenzyme B.

Belongs to the methyl-coenzyme M reductase beta subunit family. In terms of assembly, MCR is a hexamer of two alpha, two beta, and two gamma chains, forming a dimer of heterotrimers. Coenzyme F430 serves as cofactor.

It localises to the cytoplasm. It catalyses the reaction coenzyme B + methyl-coenzyme M = methane + coenzyme M-coenzyme B heterodisulfide. It participates in one-carbon metabolism; methyl-coenzyme M reduction; methane from methyl-coenzyme M: step 1/1. Its function is as follows. Component of the methyl-coenzyme M reductase (MCR) I that catalyzes the reductive cleavage of methyl-coenzyme M (CoM-S-CH3 or 2-(methylthio)ethanesulfonate) using coenzyme B (CoB or 7-mercaptoheptanoylthreonine phosphate) as reductant which results in the production of methane and the mixed heterodisulfide of CoB and CoM (CoM-S-S-CoB). This is the final step in methanogenesis. The chain is Methyl-coenzyme M reductase subunit beta (mcrB) from Methanococcus vannielii.